Consider the following 214-residue polypeptide: ATP phosphoribosyltransferase (214 aa).

Belongs to the ATP phosphoribosyltransferase family. Short subfamily. In terms of assembly, heteromultimer composed of HisG and HisZ subunits.

It localises to the cytoplasm. The enzyme catalyses 1-(5-phospho-beta-D-ribosyl)-ATP + diphosphate = 5-phospho-alpha-D-ribose 1-diphosphate + ATP. It functions in the pathway amino-acid biosynthesis; L-histidine biosynthesis; L-histidine from 5-phospho-alpha-D-ribose 1-diphosphate: step 1/9. Catalyzes the condensation of ATP and 5-phosphoribose 1-diphosphate to form N'-(5'-phosphoribosyl)-ATP (PR-ATP). Has a crucial role in the pathway because the rate of histidine biosynthesis seems to be controlled primarily by regulation of HisG enzymatic activity. This chain is ATP phosphoribosyltransferase, found in Streptococcus sanguinis (strain SK36).